The sequence spans 215 residues: Cytochrome b6 (215 aa).

A helical membrane pass occupies residues 32–52 (IFYCLGGITLVCFLIQFATGF). Cys35 provides a ligand contact to heme c. Heme b-binding residues include His86 and His100. The next 3 membrane-spanning stretches (helical) occupy residues 90–110 (ASMM…TGGF), 116–136 (LTWV…VTGY), and 186–206 (AHTF…FLMI). Residues His187 and His202 each contribute to the heme b site.

It belongs to the cytochrome b family. PetB subfamily. As to quaternary structure, the 4 large subunits of the cytochrome b6-f complex are cytochrome b6, subunit IV (17 kDa polypeptide, PetD), cytochrome f and the Rieske protein, while the 4 small subunits are PetG, PetL, PetM and PetN. The complex functions as a dimer. The cofactor is heme b. Heme c is required as a cofactor.

The protein resides in the cellular thylakoid membrane. Component of the cytochrome b6-f complex, which mediates electron transfer between photosystem II (PSII) and photosystem I (PSI), cyclic electron flow around PSI, and state transitions. This is Cytochrome b6 from Nostoc punctiforme (strain ATCC 29133 / PCC 73102).